We begin with the raw amino-acid sequence, 534 residues long: Peptide chain release factor 3 (534 aa).

Residues 9–278 form the tr-type G domain; it reads ARRRTFAIIS…FFVEHAPSPQ (270 aa). GTP is bound by residues 18 to 25, 86 to 90, and 140 to 143; these read SHPDAGKT, DTPGH, and NKLD.

The protein belongs to the TRAFAC class translation factor GTPase superfamily. Classic translation factor GTPase family. PrfC subfamily.

It localises to the cytoplasm. Functionally, increases the formation of ribosomal termination complexes and stimulates activities of RF-1 and RF-2. It binds guanine nucleotides and has strong preference for UGA stop codons. It may interact directly with the ribosome. The stimulation of RF-1 and RF-2 is significantly reduced by GTP and GDP, but not by GMP. This is Peptide chain release factor 3 from Xylella fastidiosa (strain M12).